We begin with the raw amino-acid sequence, 383 residues long: uncharacterized protein (383 aa).

The tract at residues 1-55 is disordered; that stretch reads MSSKLTVNAHYSPLKDEDPLDHIDSQTALDSMETDSTGKSSLYFSKSDDPLSKDI. The span at 13–24 shows a compositional bias: basic and acidic residues; it reads PLKDEDPLDHID. Over residues 25–44 the composition is skewed to polar residues; it reads SQTALDSMETDSTGKSSLYF. Positions 46–55 are enriched in basic and acidic residues; that stretch reads KSDDPLSKDI. 10 consecutive transmembrane segments (helical) span residues 87–107, 112–132, 157–177, 179–199, 205–225, 228–248, 262–282, 299–319, 329–349, and 352–372; these read LTIFFAVSSQIVFAILVTILN, NIINAPLLMLSFQMAFTSLMV, FIFVKILGIVSKTYCLAFVPV, FYQISRGLLLPFTILLSFVLL, LFPFGGCLLVMLGFGFGVRFE, VAPIGIILGVWSSFTTAIESV, LIYIFSALMSVFCLLLSVASL, FFIVLILSSLSNFYLNIATFT, YMISVSARSILQTLLAVAFLG, and LYGNRIYGVILILVGTLLYTL.

It belongs to the TPT transporter family.

Its subcellular location is the membrane. This is an uncharacterized protein from Schizosaccharomyces pombe (strain 972 / ATCC 24843) (Fission yeast).